Here is a 63-residue protein sequence, read N- to C-terminus: AHIDCDKECNRRCSKASAHDRCLKYCGICCEKCNCVPPGTYGNEDSCPCYANLKNSKGGHKCP.

It belongs to the GASA family. Expressed in pollen (at protein level).

This Cryptomeria japonica (Japanese cedar) protein is Cypmaclein.